Consider the following 431-residue polypeptide: MIERYSRPEMSAIWTDENRFQAWLEVEILACEAWAELGVIPKEDVKVMRENASFDINRILEIEKDTRHDVVAFTRAVSESLGEERKWVHYGLTSTDVVDTALSYLLKQANDILLKDLERFVDIIKEKAKEHKYTVMMGRTHGVHAEPTTFGLKLALWHEEMKRNLERFKQAKAGIEVGKISGAVGTYANIDPFVEQYVCEKLGLKAAPISTQTLQRDRHADYMATLALIATSIEKFAVEIRGLQKSETREVEEFFAKGQKGSSAMPHKRNPIGSENMTGMARVIRGYMMTAYENVPLWHERDISHSSAERIILPDATIALNYMLNRFSNIVKNLTVFPENMKRNMDRTLGLIYSQRVLLALIDTGLTREEAYDTVQPKAMEAWEKQVPFRELVEAEEKITSRLSPEKIADCFDYNYHLKNVDLIFERLGLA.

Residues 4-5 (RY), 67-69 (RHD), and 93-94 (TS) each bind N(6)-(1,2-dicarboxyethyl)-AMP. The active-site Proton donor/acceptor is the histidine 141. Residue glutamine 212 coordinates N(6)-(1,2-dicarboxyethyl)-AMP. Serine 262 serves as the catalytic Proton donor/acceptor. Residues serine 263, 268-270 (KRN), asparagine 276, and 307-311 (SAERI) contribute to the N(6)-(1,2-dicarboxyethyl)-AMP site.

This sequence belongs to the lyase 1 family. Adenylosuccinate lyase subfamily. As to quaternary structure, homotetramer. Residues from neighboring subunits contribute catalytic and substrate-binding residues to each active site.

The catalysed reaction is N(6)-(1,2-dicarboxyethyl)-AMP = fumarate + AMP. The enzyme catalyses (2S)-2-[5-amino-1-(5-phospho-beta-D-ribosyl)imidazole-4-carboxamido]succinate = 5-amino-1-(5-phospho-beta-D-ribosyl)imidazole-4-carboxamide + fumarate. Its pathway is purine metabolism; AMP biosynthesis via de novo pathway; AMP from IMP: step 2/2. It functions in the pathway purine metabolism; IMP biosynthesis via de novo pathway; 5-amino-1-(5-phospho-D-ribosyl)imidazole-4-carboxamide from 5-amino-1-(5-phospho-D-ribosyl)imidazole-4-carboxylate: step 2/2. In terms of biological role, catalyzes two reactions in de novo purine nucleotide biosynthesis. Catalyzes the breakdown of 5-aminoimidazole- (N-succinylocarboxamide) ribotide (SAICAR or 2-[5-amino-1-(5-phospho-beta-D-ribosyl)imidazole-4-carboxamido]succinate) to 5-aminoimidazole-4-carboxamide ribotide (AICAR or 5-amino-1-(5-phospho-beta-D-ribosyl)imidazole-4-carboxamide) and fumarate, and of adenylosuccinate (ADS or N(6)-(1,2-dicarboxyethyl)-AMP) to adenosine monophosphate (AMP) and fumarate. Influences the affinity of glutamyl--tRNA ligase for its substrates and increases its thermostability. This chain is Adenylosuccinate lyase (purB), found in Bacillus subtilis (strain 168).